Reading from the N-terminus, the 626-residue chain is Glyco-Gag protein (626 aa).

At 1–67 (LGDVPGTSGA…VWSRSRAARP (67 aa)) the chain is on the cytoplasmic side. Residues 68–86 (VCCSIVLCCFCLTVFLYLS) traverse the membrane as a helical segment. Residues 87 to 626 (ENMGQTATTP…PQASLLTLDD (540 aa)) lie on the Extracellular side of the membrane. The N-linked (GlcNAc...) asparagine; by host glycan is linked to asparagine 113. 2 stretches are compositionally biased toward pro residues: residues 199 to 212 (PSAP…PLST) and 249 to 261 (DPPP…PPSP). The interval 199 to 306 (PSAPSLPPEP…STTSQAFPLR (108 aa)) is disordered. A glycan (N-linked (GlcNAc...) asparagine; by host) is linked at asparagine 480. 2 stretches are compositionally biased toward basic and acidic residues: residues 522 to 554 (RETP…EKER) and 574 to 607 (RQDR…DCPK). Residues 522 to 626 (RETPEEREER…PQASLLTLDD (105 aa)) are disordered. The CCHC-type zinc finger occupies 590 to 607 (DQCAYCKEKGHWARDCPK).

In terms of processing, glycosylated by host. Post-translationally, cleaved by host near the middle of the molecule, releasing the c-terminal half containing capsid and nucleoprotein domains op GAG.

The protein localises to the host cell membrane. Its function is as follows. Plays a role in viral particle release. Presumably acts by facilitating the fission of the virion bud at the cell surface. May prevent the antiviral activity of murine APOBEC3. This is Glyco-Gag protein from Mus musculus (Mouse).